The primary structure comprises 225 residues: Germin-like protein 3-8 (225 aa).

The signal sequence occupies residues 1–25 (MSRTSSAPLLVLSAALAVLASTCIA). A disulfide bridge connects residues Cys-34 and Cys-57. The region spanning 71–219 (AGLAVASDTD…SFQVDAKIIK (149 aa)) is the Cupin type-1 domain. N-linked (GlcNAc...) asparagine glycosylation occurs at Asn-86. Mn(2+) contacts are provided by His-119, His-121, Glu-126, and His-165.

Belongs to the germin family. Oligomer (believed to be a pentamer but probably hexamer).

The protein resides in the secreted. Its subcellular location is the extracellular space. It localises to the apoplast. In terms of biological role, may play a role in plant defense. Probably has no oxalate oxidase activity even if the active site is conserved. The sequence is that of Germin-like protein 3-8 from Oryza sativa subsp. japonica (Rice).